A 326-amino-acid chain; its full sequence is Acetyl-coenzyme A carboxylase carboxyl transferase subunit beta (326 aa).

Positions 29–298 constitute a CoA carboxyltransferase N-terminal domain; sequence LWIKCEACGT…TLISDESLET (270 aa). Zn(2+)-binding residues include Cys-33, Cys-36, Cys-52, and Cys-55. The C4-type zinc finger occupies 33–55; the sequence is CEACGTLTYTKDLQANQMVCPEC. The segment at 302–326 is disordered; that stretch reads CHLPFQAESHNLSTTDNKIQPTPQG. Residues 309–326 are compositionally biased toward polar residues; that stretch reads ESHNLSTTDNKIQPTPQG.

Belongs to the AccD/PCCB family. As to quaternary structure, acetyl-CoA carboxylase is a heterohexamer composed of biotin carboxyl carrier protein (AccB), biotin carboxylase (AccC) and two subunits each of ACCase subunit alpha (AccA) and ACCase subunit beta (AccD). It depends on Zn(2+) as a cofactor.

The protein resides in the cytoplasm. It catalyses the reaction N(6)-carboxybiotinyl-L-lysyl-[protein] + acetyl-CoA = N(6)-biotinyl-L-lysyl-[protein] + malonyl-CoA. It participates in lipid metabolism; malonyl-CoA biosynthesis; malonyl-CoA from acetyl-CoA: step 1/1. In terms of biological role, component of the acetyl coenzyme A carboxylase (ACC) complex. Biotin carboxylase (BC) catalyzes the carboxylation of biotin on its carrier protein (BCCP) and then the CO(2) group is transferred by the transcarboxylase to acetyl-CoA to form malonyl-CoA. The sequence is that of Acetyl-coenzyme A carboxylase carboxyl transferase subunit beta from Trichodesmium erythraeum (strain IMS101).